We begin with the raw amino-acid sequence, 186 residues long: Tumor necrosis factor alpha-induced protein 8-like protein 1 (186 aa).

The protein belongs to the TNFAIP8 family. Interacts with FBXW5; TNFAIP8L1 competes with TSC2 to bind FBXW5 increasing TSC2 stability by preventing its ubiquitination. As to expression, detected in wide variety tissues, such as neurons in brain, hepatocytes, germ cells of female and male reproductive organs, muscular tissues and variety types of cells of the epithelial origin (at protein level).

Its subcellular location is the cytoplasm. In terms of biological role, acts as a negative regulator of mTOR activity. The sequence is that of Tumor necrosis factor alpha-induced protein 8-like protein 1 (Tnfaip8l1) from Mus musculus (Mouse).